The following is a 541-amino-acid chain: Protopine 6-monooxygenase (541 aa).

The chain crosses the membrane as a helical span at residues 9–29 (LLLNTWISAYSMAALLALVLV). C476 is a heme binding site.

It belongs to the cytochrome P450 family. It depends on heme as a cofactor.

It is found in the endoplasmic reticulum membrane. It catalyses the reaction protopine + reduced [NADPH--hemoprotein reductase] + O2 = 6-hydroxyprotopine + oxidized [NADPH--hemoprotein reductase] + H2O + H(+). It functions in the pathway alkaloid biosynthesis. In terms of biological role, catalyzes the conversion of protopine and allocryptopine to dihydrosanguinarine and dihydrochelerythrine, respectively, in the biosynthesis of isoquinoline alkaloid sanguinarine. The chain is Protopine 6-monooxygenase (CYP82N3) from Papaver somniferum (Opium poppy).